A 95-amino-acid chain; its full sequence is UPF0358 protein BcerKBAB4_3775 (95 aa).

It belongs to the UPF0358 family.

The sequence is that of UPF0358 protein BcerKBAB4_3775 from Bacillus mycoides (strain KBAB4) (Bacillus weihenstephanensis).